The primary structure comprises 89 residues: UPF0335 protein RPE_4107 (89 aa).

Belongs to the UPF0335 family.

This Rhodopseudomonas palustris (strain BisA53) protein is UPF0335 protein RPE_4107.